Reading from the N-terminus, the 379-residue chain is MSEFLPFSRPAMGVEELAAVKEVLESGWITTGPKNQALEQAFCQLTGNQHAIAVSSATAGMHITLMALEIGKGDEVITPSLTWVSTLNMISLLGATPVMVDVDRDTLMVTPEAIESAITPRTKAIIPVHYAGAPADIDAIRAIGERYGIAVIEDAAHAVGTYYKGRHIGAKGTAIFSFHAIKNITCAEGGLIVTDNENLARQLRMLKFHGLGVDAYDRQTWGRAPQAEVLTPGYKYNLTDINAAIALTQLVKLEHLNTRRREIAQQYQQALAALPFQPLSLPAWPHVHAWHLFIIRVDEQRCGISRDALMEALKERGIGTGLHFRAAHTQKYYRERFPTLSLPNTEWNSERICSLPLFPDMTTADADRVITALQQLAGQ.

N6-(pyridoxal phosphate)lysine is present on lysine 182.

This sequence belongs to the DegT/DnrJ/EryC1 family. ArnB subfamily. In terms of assembly, homodimer. Requires pyridoxal 5'-phosphate as cofactor.

The enzyme catalyses UDP-4-amino-4-deoxy-beta-L-arabinose + 2-oxoglutarate = UDP-beta-L-threo-pentopyranos-4-ulose + L-glutamate. The protein operates within nucleotide-sugar biosynthesis; UDP-4-deoxy-4-formamido-beta-L-arabinose biosynthesis; UDP-4-deoxy-4-formamido-beta-L-arabinose from UDP-alpha-D-glucuronate: step 2/3. It participates in bacterial outer membrane biogenesis; lipopolysaccharide biosynthesis. Catalyzes the conversion of UDP-4-keto-arabinose (UDP-Ara4O) to UDP-4-amino-4-deoxy-L-arabinose (UDP-L-Ara4N). The modified arabinose is attached to lipid A and is required for resistance to polymyxin and cationic antimicrobial peptides. This Shigella flexneri protein is UDP-4-amino-4-deoxy-L-arabinose--oxoglutarate aminotransferase.